A 322-amino-acid polypeptide reads, in one-letter code: Pantothenate kinase (322 aa).

Residue 101 to 108 coordinates ATP; sequence GSVAVGKS.

Belongs to the prokaryotic pantothenate kinase family.

It is found in the cytoplasm. The enzyme catalyses (R)-pantothenate + ATP = (R)-4'-phosphopantothenate + ADP + H(+). Its pathway is cofactor biosynthesis; coenzyme A biosynthesis; CoA from (R)-pantothenate: step 1/5. The sequence is that of Pantothenate kinase from Psychromonas ingrahamii (strain DSM 17664 / CCUG 51855 / 37).